A 227-amino-acid polypeptide reads, in one-letter code: A-type potassium channel modulatory protein KCNIP1 (227 aa).

One can recognise an EF-hand 1; degenerate domain in the interval 38–94 (LEMTMVCHRPEGLEQLEAQTNFTKRELQVLYRGFKNECPSGVVNEDTFKQIYAQFFP). 3 consecutive EF-hand domains span residues 97 to 132 (DAST…LLRG), 133 to 168 (TVHE…IYDM), and 181 to 216 (TPRQ…DDNI). Residues aspartate 146, asparagine 148, aspartate 150, tyrosine 152, glutamate 157, aspartate 194, asparagine 196, aspartate 198, and glutamate 205 each contribute to the Ca(2+) site. An interaction with KCND2 region spans residues 214 to 227 (DNIMRSLQLFQNVM).

Belongs to the recoverin family. Component of heteromultimeric potassium channels. Identified in potassium channel complexes containing KCND1, KCND2, KCND3, KCNIP1, KCNIP2, KCNIP3, KCNIP4, DPP6 and DPP10. Part of a heterooctamer composed of the tetrameric channel and four KCNIP1 chains. Probably part of a complex consisting of KCNIP1, KCNIP2 isoform 3 and KCND2. Self-associates to form homodimers and homotetramers. Interacts with KCNIP2 isoform 3 in a calcium-dependent manner. Interacts with Naja atra venom CTX3. Interacts with KCND2; this interaction mediates the capture of both the N- and C-terminus of KCND2, thus preventing KCND2 N-type inactivation and modulates the channel gating kinetics. Interacts with KCND3; each KCNIP1 monomer interacts with two adjacent KCND3 subunits, through both the N-terminal inactivation ball of a KCND3 subunit and a C-terminal helix from the adjacent KCND3 subunit, clamping them together; this interaction stabilizes the tetrameric form and modulates the channel gating kinetics namely channel activation and inactivation kinetics and rate of recovery from inactivation. Isoform 1 and isoform 2 are expressed in brain and kidney. Isoform 1 is also expressed in liver, pancreas, skeletal muscle, small intestine and testis. Isoform 2 is also expressed in lung, pancreas, leukocytes, prostate and thymus.

It is found in the cell membrane. Its subcellular location is the cytoplasm. The protein resides in the cell projection. It localises to the dendrite. In terms of biological role, regulatory subunit of Kv4/D (Shal)-type voltage-gated rapidly inactivating A-type potassium channels. Regulates channel density, inactivation kinetics and rate of recovery from inactivation in a calcium-dependent and isoform-specific manner. In vitro, modulates KCND1/Kv4.1 and KCND2/Kv4.2 currents. Increases the presence of KCND2 at the cell surface. This Homo sapiens (Human) protein is A-type potassium channel modulatory protein KCNIP1.